Reading from the N-terminus, the 479-residue chain is Serine carboxypeptidase-like 44 (479 aa).

A signal peptide spans 1-22 (MVGGKWRFLEVAVVVMVLQWSC). Disulfide bonds link Cys-92–Cys-352, Cys-253–Cys-270, and Cys-295–Cys-320. Asn-143 is a glycosylation site (N-linked (GlcNAc...) asparagine). Ser-184 is a catalytic residue. Asn-265 carries N-linked (GlcNAc...) asparagine glycosylation. N-linked (GlcNAc...) asparagine glycosylation occurs at Asn-341. Asp-389 is an active-site residue. N-linked (GlcNAc...) asparagine glycosylation occurs at Asn-411. The active site involves His-446.

It belongs to the peptidase S10 family. Expressed in seedlings.

It is found in the secreted. Its function is as follows. Probable carboxypeptidase. The sequence is that of Serine carboxypeptidase-like 44 (SCPL44) from Arabidopsis thaliana (Mouse-ear cress).